The primary structure comprises 770 residues: Semaphorin-4F (770 aa).

A signal peptide spans 1 to 34 (MPASAARPRPGPGQPTASPFPLLLLAVLSGPVSG). The Extracellular segment spans residues 35–659 (RVPRSVPRTS…RDAPSRAHTV (625 aa)). In terms of domain architecture, Sema spans 42–510 (RTSLPISEAD…SRTEVTQVNT (469 aa)). A glycan (N-linked (GlcNAc...) asparagine) is linked at asparagine 64. Cysteine 112 and cysteine 122 are disulfide-bonded. Asparagine 133 is a glycosylation site (N-linked (GlcNAc...) asparagine). 3 disulfide bridges follow: cysteine 140-cysteine 149, cysteine 273-cysteine 384, and cysteine 297-cysteine 343. Residue asparagine 509 is glycosylated (N-linked (GlcNAc...) asparagine). The PSI domain occupies 512–563 (NCGRLQSCSECILAQDPVCAWSFRLDECVAHAGEHRGLVQDIESADVSSLCP). Disulfide bonds link cysteine 513-cysteine 530, cysteine 522-cysteine 539, and cysteine 587-cysteine 628. The Ig-like C2-type domain occupies 580-635 (AAHVVLPCSPSSAWASCVWHQPSGVTALTPRRDGLEVVVTPGAMGAYACECQEGGA). Residues 660–680 (GAGLAGFFLGILAASLTLILI) form a helical membrane-spanning segment. At 681–770 (GRRQQRRRQR…PLATCDETSI (90 aa)) the chain is on the cytoplasmic side. The interval 696–725 (DKVGLDLGAPPSGTTSYSQDPPSPSPEDER) is disordered. A phosphoserine mark is found at serine 718 and serine 720. Residues 768-770 (TSI) carry the PDZ-binding motif.

The protein belongs to the semaphorin family. In terms of assembly, interacts (via PDZ-binding motif) with DLG4/SAP90 (via PDZ domain 2); this interaction may promote translocation of DLG4/SAP90 to the membrane.

The protein localises to the cell membrane. Its subcellular location is the postsynaptic density. It localises to the perikaryon. The protein resides in the cell projection. It is found in the dendrite. Functionally, probable cell surface receptor that regulates oligodendroglial precursor cell migration. Might also regulate differentiation of oligodendroglial precursor cells. Has growth cone collapse activity against retinal ganglion-cell axons. The polypeptide is Semaphorin-4F (SEMA4F) (Homo sapiens (Human)).